Here is a 426-residue protein sequence, read N- to C-terminus: Serine/threonine-protein kinase ssn3 (426 aa).

Positions 41–368 constitute a Protein kinase domain; it reads YHIVGFISSG…AQEALEHPYF (328 aa). Residues 47-55 and K71 each bind ATP; that span reads ISSGTYGRV. D173 functions as the Proton acceptor in the catalytic mechanism. Residues 390 to 426 are disordered; sequence RVTQDDNDIRSGSLPGTKRSGLPDDSLMGRAAKRLKE.

Belongs to the protein kinase superfamily. CMGC Ser/Thr protein kinase family. CDC2/CDKX subfamily. As to quaternary structure, component of the srb8-11 complex, a regulatory module of the Mediator complex. Mg(2+) serves as cofactor.

Its subcellular location is the nucleus. It catalyses the reaction L-seryl-[protein] + ATP = O-phospho-L-seryl-[protein] + ADP + H(+). The catalysed reaction is L-threonyl-[protein] + ATP = O-phospho-L-threonyl-[protein] + ADP + H(+). It carries out the reaction [DNA-directed RNA polymerase] + ATP = phospho-[DNA-directed RNA polymerase] + ADP + H(+). Its function is as follows. Component of the srb8-11 complex. The srb8-11 complex is a regulatory module of the Mediator complex which is itself involved in regulation of basal and activated RNA polymerase II-dependent transcription. The srb8-11 complex may be involved in the transcriptional repression of a subset of genes regulated by Mediator. It may inhibit the association of the Mediator complex with RNA polymerase II to form the holoenzyme complex. The srb8-11 complex phosphorylates the C-terminal domain (CTD) of the largest subunit of RNA polymerase II. This chain is Serine/threonine-protein kinase ssn3 (ssn3), found in Aspergillus clavatus (strain ATCC 1007 / CBS 513.65 / DSM 816 / NCTC 3887 / NRRL 1 / QM 1276 / 107).